Here is a 692-residue protein sequence, read N- to C-terminus: Elongation factor G 1 (692 aa).

The 276-residue stretch at Glu8 to Val283 folds into the tr-type G domain. GTP-binding positions include Ala17–Thr24, Asp81–His85, and Asn135–Asp138.

Belongs to the TRAFAC class translation factor GTPase superfamily. Classic translation factor GTPase family. EF-G/EF-2 subfamily.

It localises to the cytoplasm. Its function is as follows. Catalyzes the GTP-dependent ribosomal translocation step during translation elongation. During this step, the ribosome changes from the pre-translocational (PRE) to the post-translocational (POST) state as the newly formed A-site-bound peptidyl-tRNA and P-site-bound deacylated tRNA move to the P and E sites, respectively. Catalyzes the coordinated movement of the two tRNA molecules, the mRNA and conformational changes in the ribosome. The polypeptide is Elongation factor G 1 (Geobacter metallireducens (strain ATCC 53774 / DSM 7210 / GS-15)).